A 131-amino-acid chain; its full sequence is Dihydroneopterin aldolase 2 (131 aa).

Substrate-binding positions include Glu-29, Tyr-61, and 80–81; that span reads LE. The active-site Proton donor/acceptor is Lys-107.

Belongs to the DHNA family. In terms of assembly, homooctamer. Forms a hollow cylinder assembled from two ring-shaped tetramers. In terms of tissue distribution, expressed in roots, leaves, stems and siliques.

It catalyses the reaction 7,8-dihydroneopterin = 6-hydroxymethyl-7,8-dihydropterin + glycolaldehyde. Its pathway is cofactor biosynthesis; tetrahydrofolate biosynthesis; 2-amino-4-hydroxy-6-hydroxymethyl-7,8-dihydropteridine diphosphate from 7,8-dihydroneopterin triphosphate: step 3/4. Catalyzes the conversion of 7,8-dihydroneopterin into 6-hydroxymethyl-7,8-dihydropterin, a biosynthetic precursor of the vitamin tetrahydrofolate. Can use L-threo-dihydroneopterin and D-erythro-dihydroneopterin as substrates for the formation of 6-hydroxymethyldihydropterin, but it can also catalyze the epimerization of carbon 2' of dihydroneopterin and dihydromonapterin. The polypeptide is Dihydroneopterin aldolase 2 (Arabidopsis thaliana (Mouse-ear cress)).